The primary structure comprises 524 residues: Probable pectinesterase/pectinesterase inhibitor 19 (524 aa).

Positions 1–22 (MLVKVFSFFILMITMVVIGVSK) are cleaved as a signal peptide. The tract at residues 23 to 172 (EYCDDKQSCQ…ISRARIALAL (150 aa)) is pectinesterase inhibitor 19. The interval 215-510 (DVVVAKDGTG…FTVAKLLDGE (296 aa)) is pectinesterase 19. N-linked (GlcNAc...) asparagine glycans are attached at residues N265 and N281. T290 lines the substrate pocket. D343 serves as the catalytic Proton donor; for pectinesterase activity. An intrachain disulfide couples C357 to C377. D364 functions as the Nucleophile; for pectinesterase activity in the catalytic mechanism. N-linked (GlcNAc...) asparagine glycosylation occurs at N412. The substrate site is built by R430 and W432.

This sequence in the N-terminal section; belongs to the PMEI family. In the C-terminal section; belongs to the pectinesterase family. In terms of tissue distribution, expressed in siliques, but not in flower buds.

It localises to the secreted. The protein localises to the cell wall. The enzyme catalyses [(1-&gt;4)-alpha-D-galacturonosyl methyl ester](n) + n H2O = [(1-&gt;4)-alpha-D-galacturonosyl](n) + n methanol + n H(+). It participates in glycan metabolism; pectin degradation; 2-dehydro-3-deoxy-D-gluconate from pectin: step 1/5. In terms of biological role, acts in the modification of cell walls via demethylesterification of cell wall pectin. The chain is Probable pectinesterase/pectinesterase inhibitor 19 (PME19) from Arabidopsis thaliana (Mouse-ear cress).